The primary structure comprises 311 residues: Dihydroorotate dehydrogenase A (fumarate) (311 aa).

Residues Ser19 and 43–44 each bind FMN; that span reads KS. Substrate contacts are provided by residues Lys43, 67–71, and Asn127; that span reads NSMGL. Asn127 is an FMN binding site. Cys130 (nucleophile) is an active-site residue. Lys164 and Val192 together coordinate FMN. 193–194 is a binding site for substrate; the sequence is NS. Residues Gly221, 249-250, and 271-272 contribute to the FMN site; these read GG and GT.

Belongs to the dihydroorotate dehydrogenase family. Type 1 subfamily. As to quaternary structure, homodimer. Requires FMN as cofactor.

The protein resides in the cytoplasm. The catalysed reaction is (S)-dihydroorotate + fumarate = orotate + succinate. The protein operates within pyrimidine metabolism; UMP biosynthesis via de novo pathway. Functionally, catalyzes the conversion of dihydroorotate to orotate with fumarate as the electron acceptor. In Lactococcus lactis subsp. lactis (strain IL1403) (Streptococcus lactis), this protein is Dihydroorotate dehydrogenase A (fumarate) (pyrDA).